The chain runs to 145 residues: MSSRREGRELALQALYSSDAESLGGTFALKKIMDNFADGSEPSLDVHGRSFTFATELVNGVLSNSEAIDRKIEEKSKNWSIARMAKVDLNILRLAVFELFYRPDIPKNVTINEAIEVAKKFGAEDSPAFINGILDEIASSLPDKE.

Belongs to the NusB family.

Its function is as follows. Involved in transcription antitermination. Required for transcription of ribosomal RNA (rRNA) genes. Binds specifically to the boxA antiterminator sequence of the ribosomal RNA (rrn) operons. The chain is Transcription antitermination protein NusB from Geotalea daltonii (strain DSM 22248 / JCM 15807 / FRC-32) (Geobacter daltonii).